We begin with the raw amino-acid sequence, 393 residues long: Protein TsgA (393 aa).

Over 1 to 10 (MTNSNRIKLT) the chain is Cytoplasmic. A helical transmembrane segment spans residues 11–31 (WISFLSYALTGALVIVTGMVM). Over 32 to 50 (GNIADYFHLPVSSMSNTFT) the chain is Periplasmic. A helical transmembrane segment spans residues 51-71 (FLNAGILISIFLNAWLMEIIP). Residues 72-77 (LKTQLR) are Cytoplasmic-facing. A helical membrane pass occupies residues 78-98 (FGFILMVLAVAGLMFGHSLAL). The Periplasmic portion of the chain corresponds to 99–100 (FS). A helical transmembrane segment spans residues 101-121 (AAMFVLGLVSGITMSIGTFLI). The Cytoplasmic segment spans residues 122 to 133 (TQLYEGRQRGSR). Residues 134–154 (LLFTDSFFSMAGMIFPMVAAF) form a helical membrane-spanning segment. The Periplasmic segment spans residues 155 to 161 (LLARSIE). A helical transmembrane segment spans residues 162 to 182 (WYWVYACIGLVYLAIFILTFG). The Cytoplasmic portion of the chain corresponds to 183-205 (CEFPALGKHAQHSQAPVVKEKWG). The helical transmembrane segment at 206–226 (IGVLFLAVAALCYILGQLGFI) threads the bilayer. The Periplasmic segment spans residues 227-244 (SWVPEYAKGLGMSLNDAG). The chain crosses the membrane as a helical span at residues 245–265 (ALVSDFWMSYMFGMWAFSFIL). Residues 266–272 (RFFDLQR) are Cytoplasmic-facing. The helical transmembrane segment at 273 to 293 (ILTVLAGMAAVLMYLFITGTQ) threads the bilayer. Over 294-297 (AHMP) the chain is Periplasmic. A helical membrane pass occupies residues 298 to 318 (WFILTLGFFSSAIYTSIITLG). The Cytoplasmic portion of the chain corresponds to 319–331 (SQQTKVASPKLVN). Residues 332-352 (FILTCGTIGTMLTFVVTGPIV) traverse the membrane as a helical segment. The Periplasmic segment spans residues 353 to 360 (AHSGPQAA). The helical transmembrane segment at 361 to 381 (LLTANGLYAVVFVMCFALGFV) threads the bilayer. Topologically, residues 382-393 (SRHRQHSAPATH) are cytoplasmic.

The protein belongs to the major facilitator superfamily. TsgA family.

Its subcellular location is the cell inner membrane. The sequence is that of Protein TsgA from Salmonella choleraesuis (strain SC-B67).